The chain runs to 388 residues: tRNA (guanine(26)-N(2))-dimethyltransferase (388 aa).

The Trm1 methyltransferase domain maps to 7 to 381 (KTVEEGLTKI…APLKKIKEII (375 aa)). 5 residues coordinate S-adenosyl-L-methionine: arginine 40, arginine 70, aspartate 88, aspartate 115, and alanine 116. Residues cysteine 248, cysteine 251, cysteine 268, and cysteine 271 each contribute to the Zn(2+) site.

This sequence belongs to the class I-like SAM-binding methyltransferase superfamily. Trm1 family.

The catalysed reaction is guanosine(26) in tRNA + 2 S-adenosyl-L-methionine = N(2)-dimethylguanosine(26) in tRNA + 2 S-adenosyl-L-homocysteine + 2 H(+). Functionally, dimethylates a single guanine residue at position 26 of a number of tRNAs using S-adenosyl-L-methionine as donor of the methyl groups. The chain is tRNA (guanine(26)-N(2))-dimethyltransferase from Methanobrevibacter smithii (strain ATCC 35061 / DSM 861 / OCM 144 / PS).